Reading from the N-terminus, the 245-residue chain is tRNA (guanine-N(1)-)-methyltransferase (245 aa).

S-adenosyl-L-methionine is bound by residues G112 and 132 to 137; that span reads IGDFVL.

Belongs to the RNA methyltransferase TrmD family. As to quaternary structure, homodimer.

It is found in the cytoplasm. The catalysed reaction is guanosine(37) in tRNA + S-adenosyl-L-methionine = N(1)-methylguanosine(37) in tRNA + S-adenosyl-L-homocysteine + H(+). Functionally, specifically methylates guanosine-37 in various tRNAs. The polypeptide is tRNA (guanine-N(1)-)-methyltransferase (Geobacter sulfurreducens (strain ATCC 51573 / DSM 12127 / PCA)).